Here is a 166-residue protein sequence, read N- to C-terminus: Probable chemoreceptor glutamine deamidase CheD (166 aa).

This sequence belongs to the CheD family.

The enzyme catalyses L-glutaminyl-[protein] + H2O = L-glutamyl-[protein] + NH4(+). Functionally, probably deamidates glutamine residues to glutamate on methyl-accepting chemotaxis receptors (MCPs), playing an important role in chemotaxis. In Desulforamulus reducens (strain ATCC BAA-1160 / DSM 100696 / MI-1) (Desulfotomaculum reducens), this protein is Probable chemoreceptor glutamine deamidase CheD.